The chain runs to 431 residues: Adenylosuccinate synthetase (431 aa).

GTP is bound by residues 12-18 (GDEGKGK) and 40-42 (GHT). Aspartate 13 serves as the catalytic Proton acceptor. Residues aspartate 13 and glycine 40 each coordinate Mg(2+). Residues 13–16 (DEGK), 38–41 (NAGH), threonine 129, arginine 143, glutamine 224, threonine 239, and arginine 303 contribute to the IMP site. Histidine 41 acts as the Proton donor in catalysis. 299–305 (VTTGRAR) is a substrate binding site. Residues arginine 305, 331 to 333 (KLD), and 413 to 415 (GVG) each bind GTP.

This sequence belongs to the adenylosuccinate synthetase family. As to quaternary structure, homodimer. The cofactor is Mg(2+).

Its subcellular location is the cytoplasm. It carries out the reaction IMP + L-aspartate + GTP = N(6)-(1,2-dicarboxyethyl)-AMP + GDP + phosphate + 2 H(+). The protein operates within purine metabolism; AMP biosynthesis via de novo pathway; AMP from IMP: step 1/2. In terms of biological role, plays an important role in the de novo pathway of purine nucleotide biosynthesis. Catalyzes the first committed step in the biosynthesis of AMP from IMP. The protein is Adenylosuccinate synthetase of Mycolicibacterium vanbaalenii (strain DSM 7251 / JCM 13017 / BCRC 16820 / KCTC 9966 / NRRL B-24157 / PYR-1) (Mycobacterium vanbaalenii).